We begin with the raw amino-acid sequence, 490 residues long: Sec sixty-one protein homolog (490 aa).

At 1 to 32 (MSGFRLIDIVKPILPILPEVELPFEKLPFDDK) the chain is on the cytoplasmic side. Residues 33–53 (IVYTIFAGLIYLFAQFPLVGL) form a helical membrane-spanning segment. Residues 54 to 121 (PKATTPNVND…DRELFQSLTK (68 aa)) are Lumenal-facing. The chain crosses the membrane as a helical span at residues 122 to 142 (VFAIVQYVILTNIFIFAGYFG). The Cytoplasmic segment spans residues 143-146 (DDLS). A helical membrane pass occupies residues 147–167 (VVQIGLINFQLVGAGIFTTLL). The Lumenal segment spans residues 168 to 174 (AEVIDKG). A helical transmembrane segment spans residues 175 to 195 (FGFSSGAMIINTVVIATNLVA). The Cytoplasmic portion of the chain corresponds to 196 to 242 (DTFGVSQIKVGEDDQTEAQGALINLIQGLRSKHKTFIGGIISAFNRD). A helical transmembrane segment spans residues 243-263 (YLPNLTTTIIVLAIAIIVCYL). Topologically, residues 264–293 (QSVRVELPIRSTRARGTNNVYPIKLLYTGC) are lumenal. A helical membrane pass occupies residues 294 to 314 (LSVLFSYTILFYIHIFAFVLI). Topologically, residues 315 to 339 (QLVAKNEPTHIICKIMGHYENANNL) are cytoplasmic. Residues 340 to 360 (LAVPTFPLSLLAPPTSFFKGV) form a helical membrane-spanning segment. Residue T361 is a topological domain, lumenal. Residues 362–382 (QQPLTFITYSAFILVTGIWFA) traverse the membrane as a helical segment. At 383–421 (DKWQAISGSSARDVALEFKDQGITLMGRREQNVAKELNK) the chain is on the cytoplasmic side. Residues 422-442 (VIPIAAVTGASVLSLITVIGE) form a helical membrane-spanning segment. At 443–449 (SLGLKGK) the chain is on the lumenal side. The chain crosses the membrane as a helical span at residues 450-470 (AAGIVVGIAGGFSLLEVITIE). The Cytoplasmic segment spans residues 471-490 (YQQSGGQSALNQVLGVPGAM).

It belongs to the SecY/SEC61-alpha family. In terms of assembly, component of the heterotrimeric Ssh1 complex, which is composed of SSH1, SBH2 and SSS1.

It localises to the endoplasmic reticulum membrane. Its function is as follows. Part of the Ssh1 complex, which probably is the major component of a channel-forming translocon complex that may function exclusively in the cotranslational pathway of protein endoplasmic reticulum (ER) import. The polypeptide is Sec sixty-one protein homolog (SSH1) (Saccharomyces cerevisiae (strain ATCC 204508 / S288c) (Baker's yeast)).